Consider the following 133-residue polypeptide: Thioredoxin-like protein CXXS1 (133 aa).

Residues 1–120 (MEIQQQKGVG…VKKMVDASAE (120 aa)) enclose the Thioredoxin domain.

It belongs to the thioredoxin family.

The polypeptide is Thioredoxin-like protein CXXS1 (Oryza sativa subsp. japonica (Rice)).